Reading from the N-terminus, the 311-residue chain is 4-hydroxy-3-methylbut-2-enyl diphosphate reductase (311 aa).

Position 12 (Cys12) interacts with [4Fe-4S] cluster. 2 residues coordinate (2E)-4-hydroxy-3-methylbut-2-enyl diphosphate: His43 and His81. 2 residues coordinate dimethylallyl diphosphate: His43 and His81. Residues His43 and His81 each coordinate isopentenyl diphosphate. Cys103 contributes to the [4Fe-4S] cluster binding site. Position 131 (His131) interacts with (2E)-4-hydroxy-3-methylbut-2-enyl diphosphate. Residue His131 participates in dimethylallyl diphosphate binding. Residue His131 participates in isopentenyl diphosphate binding. Glu133 acts as the Proton donor in catalysis. Thr170 is a (2E)-4-hydroxy-3-methylbut-2-enyl diphosphate binding site. [4Fe-4S] cluster is bound at residue Cys198. The (2E)-4-hydroxy-3-methylbut-2-enyl diphosphate site is built by Ser226, Asn228, and Ser271. 3 residues coordinate dimethylallyl diphosphate: Ser226, Asn228, and Ser271. Isopentenyl diphosphate contacts are provided by Ser226, Asn228, and Ser271.

Belongs to the IspH family. It depends on [4Fe-4S] cluster as a cofactor.

The catalysed reaction is isopentenyl diphosphate + 2 oxidized [2Fe-2S]-[ferredoxin] + H2O = (2E)-4-hydroxy-3-methylbut-2-enyl diphosphate + 2 reduced [2Fe-2S]-[ferredoxin] + 2 H(+). It catalyses the reaction dimethylallyl diphosphate + 2 oxidized [2Fe-2S]-[ferredoxin] + H2O = (2E)-4-hydroxy-3-methylbut-2-enyl diphosphate + 2 reduced [2Fe-2S]-[ferredoxin] + 2 H(+). It functions in the pathway isoprenoid biosynthesis; dimethylallyl diphosphate biosynthesis; dimethylallyl diphosphate from (2E)-4-hydroxy-3-methylbutenyl diphosphate: step 1/1. Its pathway is isoprenoid biosynthesis; isopentenyl diphosphate biosynthesis via DXP pathway; isopentenyl diphosphate from 1-deoxy-D-xylulose 5-phosphate: step 6/6. Functionally, catalyzes the conversion of 1-hydroxy-2-methyl-2-(E)-butenyl 4-diphosphate (HMBPP) into a mixture of isopentenyl diphosphate (IPP) and dimethylallyl diphosphate (DMAPP). Acts in the terminal step of the DOXP/MEP pathway for isoprenoid precursor biosynthesis. This Brevibacillus brevis (strain 47 / JCM 6285 / NBRC 100599) protein is 4-hydroxy-3-methylbut-2-enyl diphosphate reductase.